Reading from the N-terminus, the 507-residue chain is Pyruvate kinase (507 aa).

Substrate is bound at residue arginine 50. K(+) is bound by residues asparagine 52, serine 54, aspartate 84, and threonine 85. Residue 52–55 participates in ATP binding; the sequence is NFSH. The ATP site is built by arginine 91 and lysine 177. Glutamate 242 provides a ligand contact to Mg(2+). Substrate is bound by residues glycine 265, aspartate 266, and threonine 298. Aspartate 266 serves as a coordination point for Mg(2+).

The protein belongs to the pyruvate kinase family. In terms of assembly, homotetramer. It depends on Mg(2+) as a cofactor. K(+) serves as cofactor.

The catalysed reaction is pyruvate + ATP = phosphoenolpyruvate + ADP + H(+). It functions in the pathway carbohydrate degradation; glycolysis; pyruvate from D-glyceraldehyde 3-phosphate: step 5/5. This is Pyruvate kinase (pyk) from Dictyostelium discoideum (Social amoeba).